The primary structure comprises 1600 residues: MNKAPQPTGPPPARSPGLPQPAFPPGQTAPVVFSTPQATQMNTPSQPRQGGFRSLQHFYPSRAQPPSSAASRVQSAAPARPGPAPHVYPAGSQVMMIPSQISYSASQGAYYIPGQGRSTYVVPTQQYPVQPGAPGFYPGASPTEFGTYAGAYYPAQGVQQFPASVAPAPVLMNQPPQIAPKRERKTIRIRDPNQGGKDITEEIMSGARTASTPTPPQTGGSLEPQPNGESPQVAVIIRPDDRSQGAAIGGRPGLPGPEHSPGTESQPSSPSPTPSPPPILEPGSESNLGVLSIPGDTMTTGMIPMSVEESTPISCETGEPYCLSPEPTLAEPILEVEVTLSKPIPESEFSSSPLQVSTALVPHKVETHEPNGVIPSEDLEPEVESSTEPAPPPLSPCASESLVPIAPTAQPEELLNGAPSPPAVDLSPVSEPEEQAKKVSSAALASILSPAPPVAPSDTSPAQEEEMEEDDDDEEGGEAESEKGGEDVPLDSTPVPAQLSQNLEVAAATQVAVSVPKRRRKIKELNKKEAVGDLLDAFKEVDPAVPEVENQPPTGSNPSPESEGSMVPTQPEETEETWDSKEDKIHNAENIQPGEQKYEYKSDQWKPLNLEEKKRYDREFLLGFQFIFASMQKPEGLPHITDVVLDKANKTPLRQLDPSRLPGINCGPDFTPSFANLGRPALSNRGPPRGGPGGELPRGPAGLGPRRSQQGPRKETRKIISSVIMTEDIKLNKAEKAWKPSSKRTAADKDRGEEDADGSKTQDLFRRVRSILNKLTPQMFQQLMKQVTQLAIDTEERLKGVIDLIFEKAISEPNFSVAYANMCRCLMALKVPTTEKPTVTVNFRKLLLNRCQKEFEKDKDDDEVFEKKQKEMDEAATAEERGRLKEELEEARDIARRRSLGNIKFIGELFKLKMLTEAIMHDCVVKLLKNHDEESLECLCRLLTTIGKDLDFAKAKPRMDQYFNQMEKIIKEKKTSSRIRFMLQDVLDLRQSNWVPRRGDQGPKTIDQIHKEAEMEEHREHIKVQQLMAKGSDKRRGGPPGPPINRGLPLVDDGGWNTVPISKGSRPIDTSRLTKITKPGSIDSNNQLFAPGGRLSWGKGSSGGSGAKPSDTASEATRPATLNRFSALQQTLPAENTDNRRVVQRSSLSRERGEKAGDRGDRLERSERGGDRGDRLDRARTPATKRSFSKEVEERSRERPSQPEGLRKAASLTEDRGRDPVKREATLPPVSPPKAALSVDEVEKKSKAIIEEYLHLNDMKEAVQCVQELASPSLLFIFVRLGIESTLERSTIAREHMGRLLHQLLCAGHLSTAQYYQGLYETLELAEDMEIDIPHVWLYLAELITPILQEDGVPMGELFREITKPLRPMGKATSLLLEILGLLCKSMGPKKVGMLWREAGLSWREFLAEGQDVGSFVAEKKVEYTLGEESEAPGQRTLAFEELRRQLEKLLKDGGSNQRVFDWIDANLNEQQIASNTLVRALMTTVCYSAIIFETPLRVDVQVLKVRARLLQKYLCDEQKELQALYALQALVVTLEQPANLLRMFFDALYDEDVVKEDAFYSWESSKDPAEQQGKGVALKSVTAFFNWLREAEDEESDHN.

Residues 1–88 form a disordered region; that stretch reads MNKAPQPTGP…ARPGPAPHVY (88 aa). Residues 7 to 24 are compositionally biased toward pro residues; that stretch reads PTGPPPARSPGLPQPAFP. Serine 15 carries the post-translational modification Phosphoserine. The segment covering 34-48 has biased composition (polar residues); it reads STPQATQMNTPSQPR. A compositionally biased stretch (low complexity) spans 60-79; sequence PSRAQPPSSAASRVQSAAPA. 2 positions are modified to omega-N-methylarginine: arginine 80 and arginine 117. Disordered regions lie at residues 173-230, 243-326, 366-501, 507-526, and 541-606; these read NQPP…NGES, SQGA…LSPE, ETHE…QLSQ, AATQVAVSVPKRRRKIKELN, and VDPA…DQWK. The tract at residues 179 to 207 is PABPC1-binding; that stretch reads APKRERKTIRIRDPNQGGKDITEEIMSGA. A compositionally biased stretch (polar residues) spans 208 to 220; it reads RTASTPTPPQTGG. Position 214 is a phosphothreonine (threonine 214). A Phosphoserine modification is found at serine 230. Pro residues predominate over residues 269–280; sequence SPSPTPSPPPIL. At serine 324 the chain carries Phosphoserine. A compositionally biased stretch (low complexity) spans 438–449; the sequence is KVSSAALASILS. Residues 463 to 479 are compositionally biased toward acidic residues; it reads QEEEMEEDDDDEEGGEA. Positions 551-562 are enriched in polar residues; the sequence is QPPTGSNPSPES. Basic and acidic residues-rich tracts occupy residues 578–587 and 596–606; these read WDSKEDKIHN and QKYEYKSDQWK. An N6-acetyllysine modification is found at lysine 606. Residues 611-622 form an EIF4E-binding region; it reads EEKKRYDREFLL. A Phosphothreonine modification is found at threonine 651. Disordered stretches follow at residues 667 to 719 and 734 to 760; these read GPDF…TRKI and AEKAWKPSSKRTAADKDRGEEDADGSK. Positions 686–1089 are eIF3/EIF4A-binding; it reads GPPRGGPGGE…GSIDSNNQLF (404 aa). Residues arginine 689 and arginine 698 each carry the omega-N-methylarginine modification. Positions 697-707 are enriched in low complexity; sequence PRGPAGLGPRR. Residues 745 to 760 are compositionally biased toward basic and acidic residues; sequence TAADKDRGEEDADGSK. An MIF4G domain is found at 765–993; sequence FRRVRSILNK…QDVLDLRQSN (229 aa). Disordered regions lie at residues 1029–1117 and 1129–1238; these read AKGS…SEAT and QQTL…AALS. Position 1032 is a phosphoserine (serine 1032). Omega-N-methylarginine occurs at positions 1036 and 1046. Phosphoserine occurs at positions 1081 and 1096. Lysine 1099 carries the N6-acetyllysine modification. Serine 1147 and serine 1149 each carry phosphoserine. A compositionally biased stretch (basic and acidic residues) spans 1148–1180; sequence LSRERGEKAGDRGDRLERSERGGDRGDRLDRAR. Serine 1187 carries the phosphoserine; by PKC/PRKCA modification. Over residues 1188–1225 the composition is skewed to basic and acidic residues; the sequence is FSKEVEERSRERPSQPEGLRKAASLTEDRGRDPVKREA. Phosphoserine is present on residues serine 1189, serine 1196, and serine 1211. Threonine 1213 is subject to Phosphothreonine. Phosphoserine is present on residues serine 1231 and serine 1238. The region spanning 1241–1363 is the MI domain; the sequence is EVEKKSKAII…PMGELFREIT (123 aa). Residues 1429-1599 enclose the W2 domain; the sequence is ESEAPGQRTL…REAEDEESDH (171 aa). An EIF4A-binding region spans residues 1450 to 1600; it reads LLKDGGSNQR…EAEDEESDHN (151 aa). The tract at residues 1585 to 1600 is necessary but not sufficient for MKNK1-binding; the sequence is FFNWLREAEDEESDHN. Phosphoserine is present on serine 1597.

The protein belongs to the eukaryotic initiation factor 4G family. In terms of assembly, eIF4F is a multi-subunit complex, the composition of which varies with external and internal environmental conditions. It is composed of at least EIF4A, EIF4E (cap-binding) and EIF4G1/EIF4G3. Interacts with eIF3 complex, mutually exclusive with EIF4A1 or EIF4A2, EIF4E and through its N-terminus with PABPC1. Interacts with EIF4E or with EIF1 (mutually exclusive) through a common binding site. Interacts through its C-terminus with the serine/threonine kinases MKNK1, and with MKNK2. Appears to act as a scaffold protein, holding these enzymes in place to phosphorylate EIF4E. Non-phosphorylated EIF4EBP1 competes with EIF4G1/EIF4G3 to interact with EIF4E; insulin stimulated MAP-kinase (MAPK1 and MAPK3) phosphorylation of EIF4EBP1 causes dissociation of the complex allowing EIF4G1/EIF4G3 to bind and consequent initiation of translation. EIF4G1/EIF4G3 interacts with PABPC1 to bring about circularization of the mRNA. Interacts with EIF4E3. Interacts with CIRBP and MIF4GD. Interacts with RBM4. Interacts with HNRNPD/AUF1; the interaction requires RNA. Interacts with DDX3X; the interaction requires RNA. Interacts with DAZAP2. (Microbial infection) Interacts with murine norovirus viral genome-linked protein (via C-terminus); this interaction plays a role in translation of viral proteins. In terms of processing, phosphorylated at multiple sites in vivo. Phosphorylation at Ser-1187 by PRKCA induces binding to MKNK1.

The protein localises to the cytoplasm. It is found in the nucleus. It localises to the stress granule. Functionally, component of the protein complex eIF4F, which is involved in the recognition of the mRNA cap, ATP-dependent unwinding of 5'-terminal secondary structure and recruitment of mRNA to the ribosome. Exists in two complexes, either with EIF1 or with EIF4E (mutually exclusive). Together with EIF1, is required for leaky scanning, in particular for avoiding cap-proximal start codon. Together with EIF4E, antagonizes the scanning promoted by EIF1-EIF4G1 and locates the start codon (through a TISU element) without scanning. As a member of the eIF4F complex, required for endoplasmic reticulum stress-induced ATF4 mRNA translation. The protein is Eukaryotic translation initiation factor 4 gamma 1 (Eif4g1) of Mus musculus (Mouse).